The following is a 5400-amino-acid chain: Midasin (5400 aa).

6 AAA-ATPase protomer regions span residues 345–571 (MVSL…HGLP), 656–986 (LLEK…AIKA), 1050–1308 (SYVK…EKVV), 1347–1652 (SMRR…VNMA), 1769–2023 (VLRV…VLRI), and 2074–2347 (IRQN…MMGP). Residues 360–367 (GPSGSGKS), 674–681 (GETGTGKT), 1079–1086 (GPTSSGKT), 1369–1376 (GDTGGGKT), 1786–1793 (GSPGVGKT), and 2095–2102 (GPSSSGKT) each bind ATP. The interval 2435–4569 (IYLSSLGVTD…DGVGAKDVSD (2135 aa)) is linker. Coiled coils occupy residues 2896 to 2916 (LERLKLEKKRLEDKMGFSEID), 3233 to 3253 (AMKITCKLLKLEEKISSLELN), and 3896 to 3916 (MEQLDLNRKNVETELKEVLKL). Disordered regions lie at residues 4540–4890 (EEDD…SSSN), 4905–4929 (TLTDNLPKMEFPQNQSSTAQQTKVN), and 4990–5069 (QVNT…RMDS). Basic and acidic residues predominate over residues 4576–4612 (QLHGTDKKEEEEKEQDDVLGKNKGIEMSDEFDGKEYS). A compositionally biased stretch (acidic residues) spans 4613-4631 (VSEDEEEDKEDEGSEDEPL). Composition is skewed to basic and acidic residues over residues 4641 to 4652 (DAEKADEKPWNK) and 4661 to 4687 (MNEKNESGPSIVDKDTRSRELRAKDDG). Composition is skewed to acidic residues over residues 4688 to 4698 (VETADEPEESN) and 4706 to 4721 (GNDENVEQDDFDDTDN). Residues 4722–4732 (LEEKIQTKEEA) show a composition bias toward basic and acidic residues. Over residues 4740–4750 (VDNEQIDDDME) the composition is skewed to acidic residues. The segment covering 4751–4762 (MDKTEEVEKEDA) has biased composition (basic and acidic residues). Acidic residues predominate over residues 4779-4798 (GENDQEETQEPSEENMEAEA). Residues 4799–4810 (EDRCGSPQKEEP) are compositionally biased toward basic and acidic residues. Residues 4811-4822 (GNDLEQEPETEP) show a composition bias toward acidic residues. A compositionally biased stretch (basic and acidic residues) spans 4823-4834 (IEGKEVMSEDMM). Composition is skewed to polar residues over residues 4839-4855 (RNDNISGVESGSQNPHG), 4864-4874 (TAPQENLSATD), 4916-4928 (PQNQSSTAQQTKV), and 5030-5040 (SKPSISNSIAE). Positions 5157-5164 (MKKVIPYI) match the Nuclear localization signal motif. A VWFA domain is found at 5186–5387 (QVVIAVDDSR…EALPRTLGDV (202 aa)). Residues 5271–5291 (VVNLLRNMNEMLENLASTRRQ) adopt a coiled-coil conformation.

Belongs to the midasin family. In terms of assembly, associates with pre-60S ribosomes in the nucleoplasm. Constitutively and ubiquitously expressed. Mostly observed in the shoot apex and root tip, and, to a lower extent, in mature seeds, seedling (excluding the hypocotyl), roots, stems, leaves and flowers.

Its subcellular location is the nucleus. It localises to the nucleolus. It is found in the nucleoplasm. Functionally, nuclear chaperone required for maturation and nuclear export of pre-60S ribosome subunits. Functions at successive maturation steps to remove ribosomal factors at critical transition points, first driving the exit of early pre-60S particles from the nucleolus and then driving late pre-60S particles from the nucleus. Required for female gametophyte development. Involved in the expression regulation of genes related to plant growth and development. In Arabidopsis thaliana (Mouse-ear cress), this protein is Midasin.